The primary structure comprises 444 residues: EMI domain-containing protein 1 (444 aa).

An N-terminal signal peptide occupies residues 1 to 22 (MGGPRAWTLLCLGLLLPGGGAA). One can recognise an EMI domain in the interval 33 to 106 (RRNWCSYVVT…PGHSGVTCEE (74 aa)). Intrachain disulfides connect cysteine 37–cysteine 96, cysteine 62–cysteine 68, and cysteine 95–cysteine 104. Threonine 42 carries an O-linked (Fuc) threonine glycan. Residue asparagine 51 is glycosylated (N-linked (GlcNAc...) asparagine). An N-linked (GlcNAc...) asparagine glycan is attached at asparagine 136. Disordered stretches follow at residues 161–374 (EQTV…KSHW) and 404–444 (PDLG…SERS). Residues 221-371 (GPPGPQGPPG…PGPKGDPGEK (151 aa)) form the Collagen-like domain. Positions 222 to 231 (PPGPQGPPGR) are enriched in pro residues. Over residues 232 to 243 (PGQTGAAGTPGK) the composition is skewed to low complexity. Composition is skewed to pro residues over residues 244–264 (MGPP…PVGP) and 292–311 (PTGP…PGLP).

Homo- or heteromers. Post-translationally, O-fucosylated at Thr-42 within the EMI domain by FUT10/POFUT3 and FUT11/POFUT4.

The protein resides in the secreted. The protein localises to the extracellular space. It is found in the extracellular matrix. This chain is EMI domain-containing protein 1 (Emid1), found in Mus musculus (Mouse).